A 376-amino-acid polypeptide reads, in one-letter code: Chorismate synthase (376 aa).

Residues Arg-39 and Arg-45 each coordinate NADP(+). Residues 115–117 (RSS), Gly-276, 291–295 (KPIPT), and Arg-317 each bind FMN.

It belongs to the chorismate synthase family. In terms of assembly, homotetramer. The cofactor is FMNH2.

The catalysed reaction is 5-O-(1-carboxyvinyl)-3-phosphoshikimate = chorismate + phosphate. It participates in metabolic intermediate biosynthesis; chorismate biosynthesis; chorismate from D-erythrose 4-phosphate and phosphoenolpyruvate: step 7/7. Its function is as follows. Catalyzes the anti-1,4-elimination of the C-3 phosphate and the C-6 proR hydrogen from 5-enolpyruvylshikimate-3-phosphate (EPSP) to yield chorismate, which is the branch point compound that serves as the starting substrate for the three terminal pathways of aromatic amino acid biosynthesis. This reaction introduces a second double bond into the aromatic ring system. The protein is Chorismate synthase of Thermotoga sp. (strain RQ2).